We begin with the raw amino-acid sequence, 93 residues long: Large ribosomal subunit protein uL23cz/uL23cy (93 aa).

It belongs to the universal ribosomal protein uL23 family. Part of the 50S ribosomal subunit.

It is found in the plastid. The protein resides in the chloroplast. Binds to 23S rRNA. The protein is Large ribosomal subunit protein uL23cz/uL23cy (rpl23-A) of Panax ginseng (Korean ginseng).